A 335-amino-acid polypeptide reads, in one-letter code: Tryptophan--tRNA ligase (335 aa).

ATP is bound by residues 19–21 and 28–29; these read QPS and GN. The short motif at 20-29 is the 'HIGH' region element; the sequence is PSSGMLHLGN. Aspartate 143 provides a ligand contact to L-tryptophan. ATP is bound by residues 155-157, isoleucine 192, and 201-205; these read GAD and KMSKS. The short motif at 201 to 205 is the 'KMSKS' region element; it reads KMSKS.

It belongs to the class-I aminoacyl-tRNA synthetase family. Homodimer.

The protein localises to the cytoplasm. The catalysed reaction is tRNA(Trp) + L-tryptophan + ATP = L-tryptophyl-tRNA(Trp) + AMP + diphosphate + H(+). In terms of biological role, catalyzes the attachment of tryptophan to tRNA(Trp). In Tropheryma whipplei (strain TW08/27) (Whipple's bacillus), this protein is Tryptophan--tRNA ligase.